The chain runs to 555 residues: CTP synthase (555 aa).

The interval 1–270 is amidoligase domain; sequence MTKFVFVTGG…DGLICDKLRL (270 aa). A CTP-binding site is contributed by Ser-13. Ser-13 is a binding site for UTP. Residues 14–19 and Asp-71 contribute to the ATP site; that span reads SLGKGI. Mg(2+) is bound by residues Asp-71 and Glu-144. Residues 151–153, 191–196, and Lys-227 contribute to the CTP site; these read DIE and KTKPTQ. UTP is bound by residues 191 to 196 and Lys-227; that span reads KTKPTQ. The region spanning 295-547 is the Glutamine amidotransferase type-1 domain; that stretch reads NIVMVGKYVE…IKAALDHQAA (253 aa). Gly-356 is an L-glutamine binding site. Catalysis depends on Cys-383, which acts as the Nucleophile; for glutamine hydrolysis. L-glutamine is bound by residues 384–387, Glu-407, and Arg-473; that span reads LGMQ. Catalysis depends on residues His-520 and Glu-522.

It belongs to the CTP synthase family. In terms of assembly, homotetramer.

The catalysed reaction is UTP + L-glutamine + ATP + H2O = CTP + L-glutamate + ADP + phosphate + 2 H(+). It catalyses the reaction L-glutamine + H2O = L-glutamate + NH4(+). It carries out the reaction UTP + NH4(+) + ATP = CTP + ADP + phosphate + 2 H(+). Its pathway is pyrimidine metabolism; CTP biosynthesis via de novo pathway; CTP from UDP: step 2/2. Allosterically activated by GTP, when glutamine is the substrate; GTP has no effect on the reaction when ammonia is the substrate. The allosteric effector GTP functions by stabilizing the protein conformation that binds the tetrahedral intermediate(s) formed during glutamine hydrolysis. Inhibited by the product CTP, via allosteric rather than competitive inhibition. In terms of biological role, catalyzes the ATP-dependent amination of UTP to CTP with either L-glutamine or ammonia as the source of nitrogen. Regulates intracellular CTP levels through interactions with the four ribonucleotide triphosphates. This Albidiferax ferrireducens (strain ATCC BAA-621 / DSM 15236 / T118) (Rhodoferax ferrireducens) protein is CTP synthase.